Here is a 109-residue protein sequence, read N- to C-terminus: Putative polyketide cyclase (109 aa).

It to polyketide cyclases.

Its function is as follows. Involved in developmentally regulated synthesis of a compound biosynthetically related to polyketide antibiotics which is essential for spore color in Streptomyces halstedii. The chain is Putative polyketide cyclase (sch4) from Streptomyces halstedii.